The following is a 329-amino-acid chain: GTP 3',8-cyclase (329 aa).

One can recognise a Radical SAM core domain in the interval 8–234 (AFARKFYYLR…QLRQRSDGPA (227 aa)). Arg17 is a GTP binding site. Residues Cys24 and Cys28 each contribute to the [4Fe-4S] cluster site. Tyr30 serves as a coordination point for S-adenosyl-L-methionine. Position 31 (Cys31) interacts with [4Fe-4S] cluster. Arg68 lines the GTP pocket. An S-adenosyl-L-methionine-binding site is contributed by Gly72. Thr99 contacts GTP. Residue Ser123 coordinates S-adenosyl-L-methionine. GTP is bound at residue Lys160. Residue Met194 coordinates S-adenosyl-L-methionine. 2 residues coordinate [4Fe-4S] cluster: Cys257 and Cys260. 262 to 264 (RLR) serves as a coordination point for GTP. [4Fe-4S] cluster is bound at residue Cys274.

The protein belongs to the radical SAM superfamily. MoaA family. As to quaternary structure, monomer and homodimer. [4Fe-4S] cluster serves as cofactor.

The catalysed reaction is GTP + AH2 + S-adenosyl-L-methionine = (8S)-3',8-cyclo-7,8-dihydroguanosine 5'-triphosphate + 5'-deoxyadenosine + L-methionine + A + H(+). It participates in cofactor biosynthesis; molybdopterin biosynthesis. In terms of biological role, catalyzes the cyclization of GTP to (8S)-3',8-cyclo-7,8-dihydroguanosine 5'-triphosphate. The sequence is that of GTP 3',8-cyclase from Escherichia coli O127:H6 (strain E2348/69 / EPEC).